Here is a 282-residue protein sequence, read N- to C-terminus: Bifunctional protein FolD 2 (282 aa).

Residues glycine 164–serine 166 and serine 189 contribute to the NADP(+) site.

It belongs to the tetrahydrofolate dehydrogenase/cyclohydrolase family. Homodimer.

It catalyses the reaction (6R)-5,10-methylene-5,6,7,8-tetrahydrofolate + NADP(+) = (6R)-5,10-methenyltetrahydrofolate + NADPH. It carries out the reaction (6R)-5,10-methenyltetrahydrofolate + H2O = (6R)-10-formyltetrahydrofolate + H(+). The protein operates within one-carbon metabolism; tetrahydrofolate interconversion. Its function is as follows. Catalyzes the oxidation of 5,10-methylenetetrahydrofolate to 5,10-methenyltetrahydrofolate and then the hydrolysis of 5,10-methenyltetrahydrofolate to 10-formyltetrahydrofolate. The sequence is that of Bifunctional protein FolD 2 from Lactobacillus johnsonii (strain CNCM I-12250 / La1 / NCC 533).